A 936-amino-acid polypeptide reads, in one-letter code: UPF0746 protein DDB_G0280787 (936 aa).

The span at 1 to 19 shows a compositional bias: basic and acidic residues; that stretch reads MISNKRKEIDTIDGHHEKD. Residues 1 to 30 form a disordered region; the sequence is MISNKRKEIDTIDGHHEKDNDDDDSDGIDN. One can recognise an SAP domain in the interval 44 to 78; that stretch reads SGSTNYRELQIIAKSLGLASNGKKQLVYNRIEGYF. Residues 91-110 form a disordered region; the sequence is ETNQQEEKKEEEQQQPQPQE.

The protein belongs to the UPF0746 family.

The polypeptide is UPF0746 protein DDB_G0280787 (Dictyostelium discoideum (Social amoeba)).